The following is a 205-amino-acid chain: CD83 antigen (205 aa).

The signal sequence occupies residues 1–19; that stretch reads MSRGLQLLLLSCAYSLAPA. The 95-residue stretch at 20 to 114 folds into the Ig-like V-type domain; sequence TPEVKVACSE…YRCTLQDPDG (95 aa). Over 20–144 the chain is Extracellular; sequence TPEVKVACSE…EETFKKYRAE (125 aa). C35 and C107 are oxidised to a cystine. Basic and acidic residues predominate over residues 60 to 69; sequence METPQEDHLR. Residues 60 to 81 form a disordered region; that stretch reads METPQEDHLRGQHYHQKGQNGS. Residues N79, N96, and N117 are each glycosylated (N-linked (GlcNAc...) asparagine). Residues 145-166 form a helical membrane-spanning segment; it reads IVLLLALVIFYLTLIIFTCKFA. The Cytoplasmic portion of the chain corresponds to 167–205; sequence RLQSIFPDFSKAGMERAFLPVTSPNKHLGLVTPHKTELV.

In terms of assembly, monomer. Homodimer. Homotrimer. Interacts with MARCHF1; this interaction antagonizes MARCHF1-mediated MHC II and CD86 down-regulation. Post-translationally, glycosylated when expressed on activated dendritic cells. As to expression, expressed by activated lymphocytes, Langerhans cells and activatd dendritic cells.

Its subcellular location is the membrane. Transmembrane glycoprotein predominantly found on the surface of many immune cells including dendritic cells or lymphocytes that plays various roles in immune response regulation. Plays an essential role in CD4(+) T-selection, differentiation and stability by regulating the activity of the major E3 ubiquitin ligase responsible for controlling MHCII trafficking MARCHF8. Also inhibits MARCHF1 association with MHCII or CD86 to prevent their ubiquitination and subsequent degradation. In addition, acts as an important modulator of protective responses against acute infections. In Homo sapiens (Human), this protein is CD83 antigen (CD83).